We begin with the raw amino-acid sequence, 319 residues long: Methionyl-tRNA formyltransferase (319 aa).

116–119 (SLLP) is a (6S)-5,6,7,8-tetrahydrofolate binding site.

The protein belongs to the Fmt family.

The enzyme catalyses L-methionyl-tRNA(fMet) + (6R)-10-formyltetrahydrofolate = N-formyl-L-methionyl-tRNA(fMet) + (6S)-5,6,7,8-tetrahydrofolate + H(+). Functionally, attaches a formyl group to the free amino group of methionyl-tRNA(fMet). The formyl group appears to play a dual role in the initiator identity of N-formylmethionyl-tRNA by promoting its recognition by IF2 and preventing the misappropriation of this tRNA by the elongation apparatus. The protein is Methionyl-tRNA formyltransferase of Treponema pallidum (strain Nichols).